The following is a 358-amino-acid chain: Phosphoribosylformylglycinamidine cyclo-ligase (358 aa).

It belongs to the AIR synthase family.

The protein resides in the cytoplasm. It catalyses the reaction 2-formamido-N(1)-(5-O-phospho-beta-D-ribosyl)acetamidine + ATP = 5-amino-1-(5-phospho-beta-D-ribosyl)imidazole + ADP + phosphate + H(+). The protein operates within purine metabolism; IMP biosynthesis via de novo pathway; 5-amino-1-(5-phospho-D-ribosyl)imidazole from N(2)-formyl-N(1)-(5-phospho-D-ribosyl)glycinamide: step 2/2. The polypeptide is Phosphoribosylformylglycinamidine cyclo-ligase (Nitrosococcus oceani (strain ATCC 19707 / BCRC 17464 / JCM 30415 / NCIMB 11848 / C-107)).